The sequence spans 188 residues: Elongation factor P (188 aa).

The protein belongs to the elongation factor P family.

Its subcellular location is the cytoplasm. Its pathway is protein biosynthesis; polypeptide chain elongation. Functionally, involved in peptide bond synthesis. Stimulates efficient translation and peptide-bond synthesis on native or reconstituted 70S ribosomes in vitro. Probably functions indirectly by altering the affinity of the ribosome for aminoacyl-tRNA, thus increasing their reactivity as acceptors for peptidyl transferase. The chain is Elongation factor P from Nitrobacter hamburgensis (strain DSM 10229 / NCIMB 13809 / X14).